A 275-amino-acid chain; its full sequence is Adaptin ear-binding coat-associated protein 1 (275 aa).

Residues 170–191 are disordered; the sequence is KGGASKPRTARGGGLSLLPPPP. An Omega-N-methylarginine modification is found at Arg180. Thr211 carries the phosphothreonine modification. 2 short sequence motifs (WXXF motif) span residues 252 to 255 and 272 to 275; these read WGDF and WVQF. The interval 254 to 275 is disordered; it reads DFSTASSSVPNQAPQPSNWVQF. A compositionally biased stretch (polar residues) spans 256-275; sequence STASSSVPNQAPQPSNWVQF.

It belongs to the NECAP family. In terms of assembly, interacts with AP1G1 and AP2A1 components of the adapter protein complexes AP-1 and AP-2. Interacts with the GAE domain proteins GGA1, GGA2 and GGA3.

The protein localises to the cytoplasmic vesicle. It is found in the clathrin-coated vesicle membrane. The protein resides in the cell membrane. Functionally, involved in endocytosis. In Homo sapiens (Human), this protein is Adaptin ear-binding coat-associated protein 1 (NECAP1).